A 349-amino-acid chain; its full sequence is Putative F-box/kelch-repeat protein At4g02310 (349 aa).

The F-box domain occupies 11 to 58 (SLFSLLPNDIVLNILARVPRWYHPILSCVSKNLRFLVSSSELKITRSL). The stretch at 154 to 204 (KIYVFGGIDDMNKRYYEGIHAQVFDLKTQTWHVGPNLSVKLACLNRSVVTP) is one Kelch repeat.

The chain is Putative F-box/kelch-repeat protein At4g02310 from Arabidopsis thaliana (Mouse-ear cress).